Consider the following 129-residue polypeptide: Small ribosomal subunit protein uS11 (129 aa).

It belongs to the universal ribosomal protein uS11 family. In terms of assembly, part of the 30S ribosomal subunit. Interacts with proteins S7 and S18. Binds to IF-3.

Located on the platform of the 30S subunit, it bridges several disparate RNA helices of the 16S rRNA. Forms part of the Shine-Dalgarno cleft in the 70S ribosome. The chain is Small ribosomal subunit protein uS11 from Azorhizobium caulinodans (strain ATCC 43989 / DSM 5975 / JCM 20966 / LMG 6465 / NBRC 14845 / NCIMB 13405 / ORS 571).